The primary structure comprises 70 residues: Large ribosomal subunit protein bL31 (70 aa).

Cys16, Cys18, Cys37, and Cys40 together coordinate Zn(2+).

This sequence belongs to the bacterial ribosomal protein bL31 family. Type A subfamily. As to quaternary structure, part of the 50S ribosomal subunit. Requires Zn(2+) as cofactor.

Its function is as follows. Binds the 23S rRNA. The protein is Large ribosomal subunit protein bL31 of Shewanella sediminis (strain HAW-EB3).